We begin with the raw amino-acid sequence, 506 residues long: Cobyric acid synthase (506 aa).

In terms of domain architecture, GATase cobBQ-type spans 251–448 (DITIAIVQLP…LHGLFDSDAF (198 aa)). The active-site Nucleophile is Cys-332. Residue His-440 is part of the active site.

The protein belongs to the CobB/CobQ family. CobQ subfamily. In terms of assembly, homodimer.

Its pathway is cofactor biosynthesis; adenosylcobalamin biosynthesis. In terms of biological role, catalyzes amidations at positions B, D, E, and G on adenosylcobyrinic A,C-diamide. NH(2) groups are provided by glutamine, and one molecule of ATP is hydrogenolyzed for each amidation. This chain is Cobyric acid synthase (cbiP), found in Salmonella typhimurium (strain LT2 / SGSC1412 / ATCC 700720).